Consider the following 161-residue polypeptide: Allophycocyanin beta chain (161 aa).

Position 71 is an N4-methylasparagine (N71). C81 is a binding site for (2R,3E)-phycocyanobilin.

Belongs to the phycobiliprotein family. As to quaternary structure, heterodimer of an alpha and a beta chain. In terms of processing, contains one covalently linked phycocyanobilin chromophore.

The protein localises to the cellular thylakoid membrane. Its function is as follows. Light-harvesting photosynthetic bile pigment-protein from the phycobiliprotein complex. Allophycocyanin has a maximum absorption at approximately 650 nanometers. This is Allophycocyanin beta chain (apcB) from Anabaena cylindrica.